A 276-amino-acid chain; its full sequence is Formamidopyrimidine-DNA glycosylase (276 aa).

Catalysis depends on Pro-2, which acts as the Schiff-base intermediate with DNA. Glu-3 serves as the catalytic Proton donor. The active-site Proton donor; for beta-elimination activity is Lys-60. DNA is bound by residues His-93 and Arg-112. An FPG-type zinc finger spans residues 240–274; that stretch reads HVYGRKQQPCHHCDTAIEKTVVGGRGTHYCPNCQP. The active-site Proton donor; for delta-elimination activity is the Arg-264.

This sequence belongs to the FPG family. Monomer. Requires Zn(2+) as cofactor.

It carries out the reaction Hydrolysis of DNA containing ring-opened 7-methylguanine residues, releasing 2,6-diamino-4-hydroxy-5-(N-methyl)formamidopyrimidine.. The catalysed reaction is 2'-deoxyribonucleotide-(2'-deoxyribose 5'-phosphate)-2'-deoxyribonucleotide-DNA = a 3'-end 2'-deoxyribonucleotide-(2,3-dehydro-2,3-deoxyribose 5'-phosphate)-DNA + a 5'-end 5'-phospho-2'-deoxyribonucleoside-DNA + H(+). Functionally, involved in base excision repair of DNA damaged by oxidation or by mutagenic agents. Acts as a DNA glycosylase that recognizes and removes damaged bases. Has a preference for oxidized purines, such as 7,8-dihydro-8-oxoguanine (8-oxoG). Has AP (apurinic/apyrimidinic) lyase activity and introduces nicks in the DNA strand. Cleaves the DNA backbone by beta-delta elimination to generate a single-strand break at the site of the removed base with both 3'- and 5'-phosphates. The chain is Formamidopyrimidine-DNA glycosylase from Shouchella clausii (strain KSM-K16) (Alkalihalobacillus clausii).